A 111-amino-acid chain; its full sequence is Large ribosomal subunit protein P1 (111 aa).

The span at 65-89 (SGAGSGPAPAAAAAAPAAGGAAPAA) shows a compositional bias: low complexity. The disordered stretch occupies residues 65–111 (SGAGSGPAPAAAAAAPAAGGAAPAAETKKKEEPKEESDDDMGFGLFD).

It belongs to the eukaryotic ribosomal protein P1/P2 family. As to quaternary structure, P1 and P2 exist as dimers at the large ribosomal subunit.

Its function is as follows. Plays an important role in the elongation step of protein synthesis. The sequence is that of Large ribosomal subunit protein P1 from Caenorhabditis elegans.